The following is a 466-amino-acid chain: Putative outer membrane protein NMB0088 (466 aa).

The first 24 residues, 1–24 (MTPSALKKTVLLLGTAFAAASVHA), serve as a signal peptide directing secretion.

Belongs to the OmpP1/FadL family.

Its subcellular location is the cell outer membrane. The sequence is that of Putative outer membrane protein NMB0088 from Neisseria meningitidis serogroup B (strain ATCC BAA-335 / MC58).